Consider the following 61-residue polypeptide: Small ribosomal subunit protein uS14 (61 aa).

Positions 24, 27, 40, and 43 each coordinate Zn(2+).

It belongs to the universal ribosomal protein uS14 family. Zinc-binding uS14 subfamily. Part of the 30S ribosomal subunit. Contacts proteins S3 and S10. The cofactor is Zn(2+).

Its function is as follows. Binds 16S rRNA, required for the assembly of 30S particles and may also be responsible for determining the conformation of the 16S rRNA at the A site. This chain is Small ribosomal subunit protein uS14, found in Thermobifida fusca (strain YX).